Here is a 253-residue protein sequence, read N- to C-terminus: REF/SRPP-like protein OsI_017815 (253 aa).

Residues 1-26 form a disordered region; it reads MADSGSDAPISNRPEEEVTVEKTPEM. The span at 13–26 shows a compositional bias: basic and acidic residues; sequence RPEEEVTVEKTPEM.

It belongs to the REF/SRPP family.

The protein is REF/SRPP-like protein OsI_017815 of Oryza sativa subsp. indica (Rice).